The primary structure comprises 143 residues: Nucleoside diphosphate kinase (143 aa).

ATP-binding residues include Lys11, Phe59, Arg87, Thr93, Arg104, and Asn114. His117 functions as the Pros-phosphohistidine intermediate in the catalytic mechanism.

This sequence belongs to the NDK family. In terms of assembly, homotetramer. The cofactor is Mg(2+).

Its subcellular location is the cytoplasm. The enzyme catalyses a 2'-deoxyribonucleoside 5'-diphosphate + ATP = a 2'-deoxyribonucleoside 5'-triphosphate + ADP. It carries out the reaction a ribonucleoside 5'-diphosphate + ATP = a ribonucleoside 5'-triphosphate + ADP. Its function is as follows. Major role in the synthesis of nucleoside triphosphates other than ATP. The ATP gamma phosphate is transferred to the NDP beta phosphate via a ping-pong mechanism, using a phosphorylated active-site intermediate. In Salmonella agona (strain SL483), this protein is Nucleoside diphosphate kinase.